A 456-amino-acid polypeptide reads, in one-letter code: GPI-anchored protein 13 (456 aa).

An N-terminal signal peptide occupies residues 1–23; that stretch reads MRSPSLAVAATTVLGLFSSSALA. Asn27 carries N-linked (GlcNAc...) asparagine glycosylation. Residue Gly433 is the site of GPI-anchor amidated glycine attachment. Residues 434–456 constitute a propeptide, removed in mature form; sequence AAAVNVVPTTAFGLFAIILASIF.

Post-translationally, the GPI-anchor is attached to the protein in the endoplasmic reticulum and serves to target the protein to the cell surface. There, the glucosamine-inositol phospholipid moiety is cleaved off and the GPI-modified mannoprotein is covalently attached via its lipidless GPI glycan remnant to the 1,6-beta-glucan of the outer cell wall layer.

Its subcellular location is the secreted. It localises to the cell wall. It is found in the membrane. In terms of biological role, cell wall protein which contributes to cell wall synthesis and is important for acquiring normal surface properties. Required for virulence in a mouse infection model. The sequence is that of GPI-anchored protein 13 (PGA13) from Candida albicans (strain SC5314 / ATCC MYA-2876) (Yeast).